Reading from the N-terminus, the 224-residue chain is Ribose-5-phosphate isomerase A (224 aa).

Substrate is bound by residues 26–29 (TGST), 81–84 (DGAD), and 94–97 (KGGG). The Proton acceptor role is filled by Glu-103. Lys-121 contributes to the substrate binding site.

It belongs to the ribose 5-phosphate isomerase family. As to quaternary structure, homodimer.

It catalyses the reaction aldehydo-D-ribose 5-phosphate = D-ribulose 5-phosphate. It participates in carbohydrate degradation; pentose phosphate pathway; D-ribose 5-phosphate from D-ribulose 5-phosphate (non-oxidative stage): step 1/1. Functionally, catalyzes the reversible conversion of ribose-5-phosphate to ribulose 5-phosphate. The polypeptide is Ribose-5-phosphate isomerase A (Listeria monocytogenes serotype 4b (strain CLIP80459)).